We begin with the raw amino-acid sequence, 206 residues long: Large ribosomal subunit protein uL4 (206 aa).

This sequence belongs to the universal ribosomal protein uL4 family. In terms of assembly, part of the 50S ribosomal subunit.

Functionally, one of the primary rRNA binding proteins, this protein initially binds near the 5'-end of the 23S rRNA. It is important during the early stages of 50S assembly. It makes multiple contacts with different domains of the 23S rRNA in the assembled 50S subunit and ribosome. In terms of biological role, forms part of the polypeptide exit tunnel. The sequence is that of Large ribosomal subunit protein uL4 from Jannaschia sp. (strain CCS1).